The sequence spans 231 residues: tRNA (guanine-N(1)-)-methyltransferase (231 aa).

S-adenosyl-L-methionine contacts are provided by residues glycine 112 and 132–137 (IGDYIL).

This sequence belongs to the RNA methyltransferase TrmD family. In terms of assembly, homodimer.

The protein localises to the cytoplasm. The enzyme catalyses guanosine(37) in tRNA + S-adenosyl-L-methionine = N(1)-methylguanosine(37) in tRNA + S-adenosyl-L-homocysteine + H(+). In terms of biological role, specifically methylates guanosine-37 in various tRNAs. The polypeptide is tRNA (guanine-N(1)-)-methyltransferase (Sulfurimonas denitrificans (strain ATCC 33889 / DSM 1251) (Thiomicrospira denitrificans (strain ATCC 33889 / DSM 1251))).